We begin with the raw amino-acid sequence, 305 residues long: tRNA pseudouridine synthase B (305 aa).

Aspartate 48 (nucleophile) is an active-site residue.

Belongs to the pseudouridine synthase TruB family. Type 1 subfamily.

The catalysed reaction is uridine(55) in tRNA = pseudouridine(55) in tRNA. Its function is as follows. Responsible for synthesis of pseudouridine from uracil-55 in the psi GC loop of transfer RNAs. This is tRNA pseudouridine synthase B from Pseudomonas putida (strain GB-1).